The following is a 356-amino-acid chain: Nucleosome assembly protein 1;4 (356 aa).

The stretch at 34-88 (VNALKNKLQNLAGQHSDILETLTPQVRKRVDVLRELQSQHDELESHFFEERAALE) forms a coiled coil. Residues 55 to 70 (LTPQVRKRVDVLRELQ) carry the Nuclear export signal motif. Positions 230–235 (KKKPKK) match the Nuclear localization signal motif. The disordered stretch occupies residues 304–356 (FTGEAAEGDEFEDIEDDDDDDDDDDDEDDEDEEDEDDEEEEKSKKKSSALKVE). Acidic residues predominate over residues 309–343 (AEGDEFEDIEDDDDDDDDDDDEDDEDEEDEDDEEE). Over residues 347–356 (KKKSSALKVE) the composition is skewed to basic residues.

Belongs to the nucleosome assembly protein (NAP) family. Can form homomeric and heteromeric protein complexes with NAP1;3. Binds histones H2A and H2B in vivo. Also able to bind histones H1 and H4 in vitro. Interacts with CYCB1;1 and with alpha tubulin.

It localises to the nucleus. It is found in the cytoplasm. Its function is as follows. May modulate chromatin structure by regulation of nucleosome assembly/disassembly. Could function together with B-type cyclins in the regulation of microtubule dynamics. This chain is Nucleosome assembly protein 1;4 (NAP1;4), found in Nicotiana tabacum (Common tobacco).